A 448-amino-acid polypeptide reads, in one-letter code: Allantoinase (448 aa).

Positions 60, 62, 147, 183, 239, and 312 each coordinate Zn(2+). N6-carboxylysine is present on K147.

This sequence belongs to the metallo-dependent hydrolases superfamily. Allantoinase family. As to quaternary structure, homotetramer. Zn(2+) is required as a cofactor. Carboxylation allows a single lysine to coordinate two zinc ions.

The catalysed reaction is (S)-allantoin + H2O = allantoate + H(+). The protein operates within nitrogen metabolism; (S)-allantoin degradation; allantoate from (S)-allantoin: step 1/1. In terms of biological role, catalyzes the conversion of allantoin (5-ureidohydantoin) to allantoic acid by hydrolytic cleavage of the five-member hydantoin ring. The sequence is that of Allantoinase from Deinococcus radiodurans (strain ATCC 13939 / DSM 20539 / JCM 16871 / CCUG 27074 / LMG 4051 / NBRC 15346 / NCIMB 9279 / VKM B-1422 / R1).